We begin with the raw amino-acid sequence, 629 residues long: Sushi domain-containing protein 5 (629 aa).

An N-terminal signal peptide occupies residues 1–35 (MTAEGPSPPARWHRRLPGLWAAALLLLGLPRLSVR). The Extracellular segment spans residues 36–574 (ADGKFFVLES…DGCPGLSRGP (539 aa)). Residues 39–134 (KFFVLESQNG…GGTYSALCIK (96 aa)) enclose the Link domain. Disulfide bonds link Cys-61-Cys-132, Cys-140-Cys-184, and Cys-167-Cys-197. Residues 138 to 199 (KPCGDPPSFP…WYGLVQACGK (62 aa)) form the Sushi domain. Over residues 225–249 (EDSRTEADEDRGQGDSSEEAPKQDR) the composition is skewed to basic and acidic residues. Disordered stretches follow at residues 225–252 (EDSR…RLVS) and 344–403 (DGPS…GLDE). Residues 575–595 (VIATIVTVLCLLLLLAGVGMV) traverse the membrane as a helical segment. Over 596–629 (WGYRKCQHKSSVYKLNVGQRQARHYHQQIEMEKV) the chain is Cytoplasmic.

It is found in the membrane. In Homo sapiens (Human), this protein is Sushi domain-containing protein 5 (SUSD5).